The primary structure comprises 332 residues: uncharacterized protein (332 aa).

Belongs to the bacterial solute-binding protein 1 family. WtpA subfamily.

This is an uncharacterized protein from Methanococcus maripaludis (strain DSM 14266 / JCM 13030 / NBRC 101832 / S2 / LL).